The sequence spans 114 residues: T cell receptor beta variable 4-3 (114 aa).

A signal peptide spans 1 to 21; that stretch reads MGCRLLCCAVLCLLGAVPMET. The Ig-like domain occupies 22-114; it reads GVTQTPRHLV…SALYLCASSQ (93 aa). A disulfide bridge connects residues cysteine 42 and cysteine 110. Asparagine 76 and asparagine 89 each carry an N-linked (GlcNAc...) asparagine glycan.

As to quaternary structure, alpha-beta TR is a heterodimer composed of an alpha and beta chain; disulfide-linked. The alpha-beta TR is associated with the transmembrane signaling CD3 coreceptor proteins to form the TR-CD3 (TcR or TCR). The assembly of alpha-beta TR heterodimers with CD3 occurs in the endoplasmic reticulum where a single alpha-beta TR heterodimer associates with one CD3D-CD3E heterodimer, one CD3G-CD3E heterodimer and one CD247 homodimer forming a stable octameric structure. CD3D-CD3E and CD3G-CD3E heterodimers preferentially associate with TR alpha and TR beta chains, respectively. The association of the CD247 homodimer is the last step of TcR assembly in the endoplasmic reticulum and is required for transport to the cell surface.

The protein resides in the cell membrane. V region of the variable domain of T cell receptor (TR) beta chain that participates in the antigen recognition. Alpha-beta T cell receptors are antigen specific receptors which are essential to the immune response and are present on the cell surface of T lymphocytes. Recognize peptide-major histocompatibility (MH) (pMH) complexes that are displayed by antigen presenting cells (APC), a prerequisite for efficient T cell adaptive immunity against pathogens. Binding of alpha-beta TR to pMH complex initiates TR-CD3 clustering on the cell surface and intracellular activation of LCK that phosphorylates the ITAM motifs of CD3G, CD3D, CD3E and CD247 enabling the recruitment of ZAP70. In turn ZAP70 phosphorylates LAT, which recruits numerous signaling molecules to form the LAT signalosome. The LAT signalosome propagates signal branching to three major signaling pathways, the calcium, the mitogen-activated protein kinase (MAPK) kinase and the nuclear factor NF-kappa-B (NF-kB) pathways, leading to the mobilization of transcription factors that are critical for gene expression and essential for T cell growth and differentiation. The T cell repertoire is generated in the thymus, by V-(D)-J rearrangement. This repertoire is then shaped by intrathymic selection events to generate a peripheral T cell pool of self-MH restricted, non-autoaggressive T cells. Post-thymic interaction of alpha-beta TR with the pMH complexes shapes TR structural and functional avidity. The protein is T cell receptor beta variable 4-3 of Homo sapiens (Human).